We begin with the raw amino-acid sequence, 1161 residues long: Integrin alpha-D (1161 aa).

The signal sequence occupies residues 1-17 (MTFGTVLLLSVLASYHG). The Extracellular portion of the chain corresponds to 18–1099 (FNLDVEEPTI…MVLEEDEVYN (1082 aa)). FG-GAP repeat units follow at residues 19 to 76 (NLDV…MCQP) and 77 to 136 (IPLH…IIQT). Asparagine 59 carries an N-linked (GlcNAc...) asparagine glycan. Cysteine 67 and cysteine 74 are disulfide-bonded. Residues asparagine 87 and asparagine 99 are each glycosylated (N-linked (GlcNAc...) asparagine). Cysteine 106 and cysteine 124 form a disulfide bridge. One can recognise a VWFA domain in the interval 150–332 (DIVFLIDGSG…SIQKQLQEKI (183 aa)). 5 FG-GAP repeats span residues 339 to 390 (QSRA…PTFI), 391 to 442 (NMSQ…SRQW), 443 to 503 (RKKA…RVQW), 506 to 564 (DAVL…SGIS), and 569 to 629 (QRIA…FSPV). Asparagine 391 carries N-linked (GlcNAc...) asparagine glycosylation. The Ca(2+) site is built by aspartate 465, aspartate 467, aspartate 469, aspartate 473, aspartate 529, asparagine 531, aspartate 533, aspartate 537, aspartate 592, aspartate 596, and aspartate 600. Cysteine 654 and cysteine 709 are oxidised to a cystine. N-linked (GlcNAc...) asparagine glycans are attached at residues asparagine 690 and asparagine 732. Intrachain disulfides connect cysteine 768–cysteine 774 and cysteine 845–cysteine 860. N-linked (GlcNAc...) asparagine glycosylation is found at asparagine 872 and asparagine 956. 2 disulfides stabilise this stretch: cysteine 993-cysteine 1017 and cysteine 1022-cysteine 1027. Asparagine 1045 carries N-linked (GlcNAc...) asparagine glycosylation. A helical transmembrane segment spans residues 1100 to 1120 (AIPIIMGSSVGALLLLALITA). The Cytoplasmic segment spans residues 1121–1161 (TLYKLGFFKRHYKEMLEDKPEDTATFSGDDFSCVAPNVPLS). The GFFKR motif motif lies at 1126–1130 (GFFKR).

It belongs to the integrin alpha chain family. As to quaternary structure, heterodimer of an alpha and a beta subunit. Alpha-D associates with beta-2. As to expression, expressed moderately on myelomonocytic cell lines and subsets of peripheral blood leukocytes and strongly on tissue-specialized cells, including macrophages foam cells within atherosclerotic plaques, and on splenic red pulp macrophages.

It is found in the membrane. Functionally, integrin alpha-D/beta-2 is a receptor for ICAM3 and VCAM1. May play a role in the atherosclerotic process such as clearing lipoproteins from plaques and in phagocytosis of blood-borne pathogens, particulate matter, and senescent erythrocytes from the blood. This chain is Integrin alpha-D (ITGAD), found in Homo sapiens (Human).